A 259-amino-acid chain; its full sequence is Triosephosphate isomerase (259 aa).

Asn-10–Lys-12 contacts substrate. His-102 acts as the Electrophile in catalysis. Residue Glu-174 is the Proton acceptor of the active site. Residues Gly-180, Ser-220, and Gly-241 to Gly-242 each bind substrate.

This sequence belongs to the triosephosphate isomerase family. Homodimer.

It is found in the cytoplasm. It catalyses the reaction D-glyceraldehyde 3-phosphate = dihydroxyacetone phosphate. Its pathway is carbohydrate biosynthesis; gluconeogenesis. It functions in the pathway carbohydrate degradation; glycolysis; D-glyceraldehyde 3-phosphate from glycerone phosphate: step 1/1. In terms of biological role, involved in the gluconeogenesis. Catalyzes stereospecifically the conversion of dihydroxyacetone phosphate (DHAP) to D-glyceraldehyde-3-phosphate (G3P). The chain is Triosephosphate isomerase from Cutibacterium acnes (strain DSM 16379 / KPA171202) (Propionibacterium acnes).